The sequence spans 989 residues: Bifunctional glutamine synthetase adenylyltransferase/adenylyl-removing enzyme (989 aa).

The adenylyl removase stretch occupies residues 1-474; the sequence is MNSSAIDADI…HYGKLFEGDP (474 aa). The segment at 480 to 989 is adenylyl transferase; it reads LPIDYAGGPD…FNRLIGGDSA (510 aa).

Belongs to the GlnE family. Mg(2+) serves as cofactor.

It catalyses the reaction [glutamine synthetase]-O(4)-(5'-adenylyl)-L-tyrosine + phosphate = [glutamine synthetase]-L-tyrosine + ADP. The enzyme catalyses [glutamine synthetase]-L-tyrosine + ATP = [glutamine synthetase]-O(4)-(5'-adenylyl)-L-tyrosine + diphosphate. Its function is as follows. Involved in the regulation of glutamine synthetase GlnA, a key enzyme in the process to assimilate ammonia. When cellular nitrogen levels are high, the C-terminal adenylyl transferase (AT) inactivates GlnA by covalent transfer of an adenylyl group from ATP to specific tyrosine residue of GlnA, thus reducing its activity. Conversely, when nitrogen levels are low, the N-terminal adenylyl removase (AR) activates GlnA by removing the adenylyl group by phosphorolysis, increasing its activity. The regulatory region of GlnE binds the signal transduction protein PII (GlnB) which indicates the nitrogen status of the cell. This chain is Bifunctional glutamine synthetase adenylyltransferase/adenylyl-removing enzyme, found in Rhodopseudomonas palustris (strain BisB5).